The primary structure comprises 404 residues: Spore germination protein YndF (404 aa).

Residues 1–24 form the signal peptide; the sequence is MKSKLKRQLPAMVIVCLLMICVTG. Cys25 carries N-palmitoyl cysteine lipidation. Cys25 is lipidated: S-diacylglycerol cysteine.

This sequence belongs to the GerABKC lipoprotein family.

Its subcellular location is the cell membrane. In terms of biological role, may be involved in spore germination. The polypeptide is Spore germination protein YndF (yndF) (Bacillus subtilis (strain 168)).